A 288-amino-acid chain; its full sequence is Hydroxyethylthiazole kinase (288 aa).

A substrate-binding site is contributed by M55. 2 residues coordinate ATP: N131 and S177. G204 is a binding site for substrate.

The protein belongs to the Thz kinase family. The cofactor is Mg(2+).

The enzyme catalyses 5-(2-hydroxyethyl)-4-methylthiazole + ATP = 4-methyl-5-(2-phosphooxyethyl)-thiazole + ADP + H(+). The protein operates within cofactor biosynthesis; thiamine diphosphate biosynthesis; 4-methyl-5-(2-phosphoethyl)-thiazole from 5-(2-hydroxyethyl)-4-methylthiazole: step 1/1. Functionally, catalyzes the phosphorylation of the hydroxyl group of 4-methyl-5-beta-hydroxyethylthiazole (THZ). In Haloquadratum walsbyi (strain DSM 16790 / HBSQ001), this protein is Hydroxyethylthiazole kinase.